The sequence spans 495 residues: UDP-N-acetylmuramoyl-L-alanyl-D-glutamate--2,6-diaminopimelate ligase (495 aa).

UDP-N-acetyl-alpha-D-muramoyl-L-alanyl-D-glutamate-binding positions include Leu27, Ser29, and 44–46 (HQA). 116–122 (GTNGKTT) serves as a coordination point for ATP. Residues Asn157, 158–159 (TT), Ser185, Gln191, and Arg193 contribute to the UDP-N-acetyl-alpha-D-muramoyl-L-alanyl-D-glutamate site. N6-carboxylysine is present on Lys225. Residues Arg390, 414 to 417 (DNPR), Gly465, and Glu469 contribute to the meso-2,6-diaminopimelate site. Residues 414–417 (DNPR) carry the Meso-diaminopimelate recognition motif motif.

This sequence belongs to the MurCDEF family. MurE subfamily. It depends on Mg(2+) as a cofactor. Carboxylation is probably crucial for Mg(2+) binding and, consequently, for the gamma-phosphate positioning of ATP.

The protein resides in the cytoplasm. The catalysed reaction is UDP-N-acetyl-alpha-D-muramoyl-L-alanyl-D-glutamate + meso-2,6-diaminopimelate + ATP = UDP-N-acetyl-alpha-D-muramoyl-L-alanyl-gamma-D-glutamyl-meso-2,6-diaminopimelate + ADP + phosphate + H(+). Its pathway is cell wall biogenesis; peptidoglycan biosynthesis. Catalyzes the addition of meso-diaminopimelic acid to the nucleotide precursor UDP-N-acetylmuramoyl-L-alanyl-D-glutamate (UMAG) in the biosynthesis of bacterial cell-wall peptidoglycan. This chain is UDP-N-acetylmuramoyl-L-alanyl-D-glutamate--2,6-diaminopimelate ligase, found in Escherichia coli O157:H7.